Here is an 805-residue protein sequence, read N- to C-terminus: Mediator of RNA polymerase II transcription subunit 25 (805 aa).

2 disordered regions span residues 430–455 and 786–805; these read GSAQNTQNSAPSSFTSTAPSMSGQTV and SQSQGSSQGLPITPGGGFMN. Composition is skewed to low complexity over residues 438–451 and 786–795; these read SAPSSFTSTAPSMS and SQSQGSSQGL.

The protein belongs to the Mediator complex subunit 25 family. As to quaternary structure, interacts with MYC2 (via N-terminus). MED25 competes with JAZ7 for binding to MYC2.

Functionally, component of the Mediator complex, a coactivator involved in the regulated transcription of nearly all RNA polymerase II-dependent genes. Mediator functions as a bridge to convey information from gene-specific regulatory proteins to the basal RNA polymerase II transcription machinery. Mediator is recruited to promoters by direct interactions with regulatory proteins and serves as a scaffold for the assembly of a functional pre-initiation complex with RNA polymerase II and the general transcription factors. Plays a positive role in wound-induced activation of jasmonate-responsive genes whose promoters are targeted by MYC2. The protein is Mediator of RNA polymerase II transcription subunit 25 of Solanum lycopersicum (Tomato).